A 396-amino-acid polypeptide reads, in one-letter code: Ribosomal RNA large subunit methyltransferase I (396 aa).

The region spanning 2-81 (SVRLVLAKGR…ESIDIAFFSR (80 aa)) is the PUA domain.

This sequence belongs to the methyltransferase superfamily. RlmI family.

It localises to the cytoplasm. It catalyses the reaction cytidine(1962) in 23S rRNA + S-adenosyl-L-methionine = 5-methylcytidine(1962) in 23S rRNA + S-adenosyl-L-homocysteine + H(+). Its function is as follows. Specifically methylates the cytosine at position 1962 (m5C1962) of 23S rRNA. The chain is Ribosomal RNA large subunit methyltransferase I from Shigella flexneri.